Reading from the N-terminus, the 550-residue chain is Chaperonin GroEL (550 aa).

ATP-binding positions include 30–33, Lys-51, 87–91, Gly-415, 479–481, and Asp-495; these read TLGP, DGTTT, and NAA.

The protein belongs to the chaperonin (HSP60) family. Forms a cylinder of 14 subunits composed of two heptameric rings stacked back-to-back. Interacts with the co-chaperonin GroES.

It is found in the cytoplasm. The catalysed reaction is ATP + H2O + a folded polypeptide = ADP + phosphate + an unfolded polypeptide.. Its function is as follows. Together with its co-chaperonin GroES, plays an essential role in assisting protein folding. The GroEL-GroES system forms a nano-cage that allows encapsulation of the non-native substrate proteins and provides a physical environment optimized to promote and accelerate protein folding. This is Chaperonin GroEL from Marinobacter nauticus (strain ATCC 700491 / DSM 11845 / VT8) (Marinobacter aquaeolei).